We begin with the raw amino-acid sequence, 361 residues long: Phosphoserine aminotransferase (361 aa).

L-glutamate-binding residues include Ser-9 and Arg-42. Residues 76–77, Trp-102, Thr-153, Asp-173, and Gln-196 contribute to the pyridoxal 5'-phosphate site; that span reads AR. Lys-197 is subject to N6-(pyridoxal phosphate)lysine. Residue 238 to 239 participates in pyridoxal 5'-phosphate binding; the sequence is NT.

Belongs to the class-V pyridoxal-phosphate-dependent aminotransferase family. SerC subfamily. Homodimer. Pyridoxal 5'-phosphate is required as a cofactor.

It localises to the cytoplasm. It catalyses the reaction O-phospho-L-serine + 2-oxoglutarate = 3-phosphooxypyruvate + L-glutamate. The catalysed reaction is 4-(phosphooxy)-L-threonine + 2-oxoglutarate = (R)-3-hydroxy-2-oxo-4-phosphooxybutanoate + L-glutamate. It functions in the pathway amino-acid biosynthesis; L-serine biosynthesis; L-serine from 3-phospho-D-glycerate: step 2/3. It participates in cofactor biosynthesis; pyridoxine 5'-phosphate biosynthesis; pyridoxine 5'-phosphate from D-erythrose 4-phosphate: step 3/5. In terms of biological role, catalyzes the reversible conversion of 3-phosphohydroxypyruvate to phosphoserine and of 3-hydroxy-2-oxo-4-phosphonooxybutanoate to phosphohydroxythreonine. In Sodalis glossinidius (strain morsitans), this protein is Phosphoserine aminotransferase.